The following is a 441-amino-acid chain: AP-2 complex subunit mu (441 aa).

In terms of domain architecture, MHD spans 174 to 440 (RNELFLDVIE…IGRSGLYETR (267 aa)).

The protein belongs to the adapter complexes medium subunit family. Adapter protein complex 2 (AP-2) is a heterotetramer composed of two large adaptins (alpha-type subunit and beta-type subunits), a medium adaptin (mu-type subunit AP50) and a small adaptin (sigma-type subunit AP17). As to expression, brain, heart, lung, liver, testis and spleen.

The protein localises to the cell membrane. It is found in the membrane. It localises to the coated pit. Its function is as follows. Component of the adapter complexes which link clathrin to receptors in coated vesicles. Clathrin-associated protein complexes are believed to interact with the cytoplasmic tails of membrane proteins, leading to their selection and concentration. AP50 is a subunit of the plasma membrane adapter. Essential wnt/egl-20 signaling protein that functions in wnt/egl-20-producing cells. Required for the AP-2 complex-mediated endocytosis of membrane proteins including wntless homolog mig-14 in egl-20-producing cells. During development, regulates the migration of HSN neurons and the left and right Q neuroblasts (QL and QR, respectively) and their descendants, possibly through hox gene and wnt/egl-20 gene target mab-5, and plays a role in establishing ALM and PLM neuronal cell polarity. Regulates AWB sensory neuron cilia membrane expansion during development, potentially via localization of tub-1 and PtdIns(4,5)P2 to the ciliary base. Required for the asymmetric divisions of V5 cells. This Caenorhabditis elegans protein is AP-2 complex subunit mu (dpy-23).